The chain runs to 246 residues: UPF0736 protein GWCH70_0753 (246 aa).

This sequence belongs to the UPF0736 family.

The chain is UPF0736 protein GWCH70_0753 from Geobacillus sp. (strain WCH70).